The sequence spans 40 residues: Cytochrome b6-f complex subunit 5 (40 aa).

A helical transmembrane segment spans residues 5 to 25 (ILLGMVLGFVPVTIAGLLVAA).

This sequence belongs to the PetG family. The 4 large subunits of the cytochrome b6-f complex are cytochrome b6, subunit IV (17 kDa polypeptide, PetD), cytochrome f and the Rieske protein, while the 4 small subunits are PetG, PetL, PetM and PetN. The complex functions as a dimer.

The protein resides in the cell inner membrane. Component of the cytochrome b6-f complex, which mediates electron transfer between photosystem II (PSII) and photosystem I (PSI), cyclic electron flow around PSI, and state transitions. PetG is required for either the stability or assembly of the cytochrome b6-f complex. This is Cytochrome b6-f complex subunit 5 from Gloeobacter violaceus (strain ATCC 29082 / PCC 7421).